Here is a 60-residue protein sequence, read N- to C-terminus: Potassium channel toxin alpha-KTx 15.9 (60 aa).

An N-terminal signal peptide occupies residues 1–22; that stretch reads MKIFLPVLVMLILCSMCLLTEG. Cystine bridges form between Cys-30–Cys-51, Cys-36–Cys-56, and Cys-40–Cys-58.

Belongs to the short scorpion toxin superfamily. Potassium channel inhibitor family. Alpha-KTx 15 subfamily. Expressed by the venom gland.

The protein resides in the secreted. In terms of biological role, blocker of A-type voltage-gated potassium channels of cerebellar granular cells. May also inhibit Kv4/KCND when coexpressed with DPP6 or DPP10. The occlusion of the outer entry of the K(+) conducting pore is partially reversible and affects both open and closed channels. It shares the same target in rat brain than BmTX3 (AC Q8I0L5) and AmmTX3 (AC P60208). Has been shown to weakly inhibit TRPV1 channels. In Lychas mucronatus (Chinese swimming scorpion), this protein is Potassium channel toxin alpha-KTx 15.9.